The following is a 357-amino-acid chain: Scopoletin 8-hydroxylase (357 aa).

The 102-residue stretch at 206-307 folds into the Fe2OG dioxygenase domain; it reads MGTKMVNMNY…RVSVPIFTAP (102 aa). Tyr-216 lines the 2-oxoglutarate pocket. His-231, Asp-233, and His-288 together coordinate Fe cation. Residues Arg-298 and Ser-300 each coordinate 2-oxoglutarate.

It belongs to the iron/ascorbate-dependent oxidoreductase family. Requires L-ascorbate as cofactor. The cofactor is Fe(2+). As to expression, expressed in both primary and lateral roots under iron-deficient conditions, except in apical root zones, and mostly in the root epidermal layer.

The enzyme catalyses scopoletin + 2-oxoglutarate + O2 = fraxetin + succinate + CO2. It participates in phenylpropanoid metabolism. Functionally, involved in the pathway of sideretin biosynthesis from feruloyl CoA, a redox-active catecholic metabolite exuded by roots in response to iron deficiency in order to facilitate the uptake of iron; this pathway consists in the successive conversion from feruloyl CoA to scopoletin, from scopoletin to fraxetin and from fraxetin to sideretin. Catalyzes the biosynthesis of fraxetin via scopoletin hydroxylation. The chain is Scopoletin 8-hydroxylase from Arabidopsis thaliana (Mouse-ear cress).